Reading from the N-terminus, the 402-residue chain is NAD-dependent protein deacetylase sirtuin-7 (402 aa).

Disordered regions lie at residues Met1 to Gln25 and Val59 to Glu78. The span at Arg9–Gln25 shows a compositional bias: basic and acidic residues. Residues Pro83–Glu330 enclose the Deacetylase sirtuin-type domain. Residues Gly108 to Trp127 and Gln168 to Asp171 each bind NAD(+). His188 acts as the Proton acceptor in catalysis. Positions 196, 199, 226, and 229 each coordinate Zn(2+). NAD(+)-binding positions include Gly269–Ser271, Asn298–Gln300, and Cys316. Residues Ser355–Gly385 form a disordered region. Position 390 is an asymmetric dimethylarginine; alternate (Arg390). An Omega-N-methylarginine; alternate modification is found at Arg390.

It belongs to the sirtuin family. Class IV subfamily. Interacts with UBTF and the RNA polymerase I complex. Interacts with components of the B-WICH complex, such as MYBBP1A, SMARCA5/SNF2H and BAZ1B/WSTF. Interacts with ELK4, leading to stabilization at target promoters for H3K18Ac deacetylation. Interacts with histone H2A and/or histone H2B. Interacts with DNMT1. Interacts with SIRT1. Requires Zn(2+) as cofactor. Phosphorylated during mitosis. In terms of processing, methylation at Arg-390 by PRMT6 inhibits the H3K18Ac histone deacetylase activity, promoting mitochondria biogenesis and maintaining mitochondria respiration. Post-translationally, ubiquitinated via 'Lys-63'-linked ubiquitin chains. Deubiquitinated by USP7, inhibiting the H3K18Ac histone deacetylase activity and regulating gluconeogenesis. Ubiquitinated by E3 ubiquitin-protein ligase complex containing FBXO7; leading to proteasomal degradation.

It is found in the nucleus. Its subcellular location is the nucleolus. The protein resides in the nucleoplasm. It localises to the chromosome. The protein localises to the cytoplasm. It carries out the reaction N(6)-acetyl-L-lysyl-[protein] + NAD(+) + H2O = 2''-O-acetyl-ADP-D-ribose + nicotinamide + L-lysyl-[protein]. It catalyses the reaction N(6)-glutaryl-L-lysyl-[protein] + NAD(+) + H2O = 2''-O-glutaryl-ADP-D-ribose + nicotinamide + L-lysyl-[protein]. The catalysed reaction is N(6)-succinyl-L-lysyl-[protein] + NAD(+) + H2O = 2''-O-succinyl-ADP-D-ribose + nicotinamide + L-lysyl-[protein]. The enzyme catalyses N(6)-propanoyl-L-lysyl-[protein] + NAD(+) + H2O = 3''-O-propanoyl-ADP-D-ribose + nicotinamide + L-lysyl-[protein]. It carries out the reaction N(6)-decanoyl-L-lysyl-[protein] + NAD(+) + H2O = 2''-O-decanoyl-ADP-D-ribose + nicotinamide + L-lysyl-[protein]. NAD-dependent protein-lysine deacetylase and deacylase activities are activated by nucleic acids. Histone deacetylase activity is activated by DNA. Protein-lysine deacylase activity is activated by RNA. H3K18Ac histone deacetylase activity is inhibited by methylation at Arg-390. H3K18Ac histone deacetylase activity is inhibited by deubiquitination by USP7. NAD-dependent protein-lysine deacylase that can act both as a deacetylase or deacylase (desuccinylase, depropionylase, deglutarylase and dedecanoylase), depending on the context. Specifically mediates deacetylation of histone H3 at 'Lys-18' (H3K18Ac). In contrast to other histone deacetylases, displays strong preference for a specific histone mark, H3K18Ac, directly linked to control of gene expression. H3K18Ac is mainly present around the transcription start site of genes and has been linked to activation of nuclear hormone receptors; SIRT7 thereby acts as a transcription repressor. Moreover, H3K18 hypoacetylation has been reported as a marker of malignancy in various cancers and seems to maintain the transformed phenotype of cancer cells. Also able to mediate deacetylation of histone H3 at 'Lys-36' (H3K36Ac) in the context of nucleosomes. Also mediates deacetylation of non-histone proteins, such as ATM, CDK9, DDX21, DDB1, FBL, FKBP5/FKBP51, GABPB1, RAN, RRP9/U3-55K and POLR1E/PAF53. Enriched in nucleolus where it stimulates transcription activity of the RNA polymerase I complex. Acts by mediating the deacetylation of the RNA polymerase I subunit POLR1E/PAF53, thereby promoting the association of RNA polymerase I with the rDNA promoter region and coding region. In response to metabolic stress, SIRT7 is released from nucleoli leading to hyperacetylation of POLR1E/PAF53 and decreased RNA polymerase I transcription. Required to restore the transcription of ribosomal RNA (rRNA) at the exit from mitosis. Promotes pre-ribosomal RNA (pre-rRNA) cleavage at the 5'-terminal processing site by mediating deacetylation of RRP9/U3-55K, a core subunit of the U3 snoRNP complex. Mediates 'Lys-37' deacetylation of Ran, thereby regulating the nuclear export of NF-kappa-B subunit RELA/p65. Acts as a regulator of DNA damage repair by mediating deacetylation of ATM during the late stages of DNA damage response, promoting ATM dephosphorylation and deactivation. Suppresses the activity of the DCX (DDB1-CUL4-X-box) E3 ubiquitin-protein ligase complexes by mediating deacetylation of DDB1, which prevents the interaction between DDB1 and CUL4 (CUL4A or CUL4B). Activates RNA polymerase II transcription by mediating deacetylation of CDK9, thereby promoting 'Ser-2' phosphorylation of the C-terminal domain (CTD) of RNA polymerase II. Deacetylates FBL, promoting histone-glutamine methyltransferase activity of FBL. Acts as a regulator of mitochondrial function by catalyzing deacetylation of GABPB1. Regulates Akt/AKT1 activity by mediating deacetylation of FKBP5/FKBP51. Required to prevent R-loop-associated DNA damage and transcription-associated genomic instability by mediating deacetylation and subsequent activation of DDX21, thereby overcoming R-loop-mediated stalling of RNA polymerases. In addition to protein deacetylase activity, also acts as a protein-lysine deacylase. Acts as a protein depropionylase by mediating depropionylation of Osterix (SP7), thereby regulating bone formation by osteoblasts. Acts as a histone deglutarylase by mediating deglutarylation of histone H4 on 'Lys-91' (H4K91glu); a mark that destabilizes nucleosomes by promoting dissociation of the H2A-H2B dimers from nucleosomes. Acts as a histone desuccinylase: in response to DNA damage, recruited to DNA double-strand breaks (DSBs) and catalyzes desuccinylation of histone H3 on 'Lys-122' (H3K122succ), thereby promoting chromatin condensation and DSB repair. Also promotes DSB repair by promoting H3K18Ac deacetylation, regulating non-homologous end joining (NHEJ). Along with its role in DNA repair, required for chromosome synapsis during prophase I of female meiosis by catalyzing H3K18Ac deacetylation. Involved in transcriptional repression of LINE-1 retrotransposon via H3K18Ac deacetylation, and promotes their association with the nuclear lamina. Required to stabilize ribosomal DNA (rDNA) heterochromatin and prevent cellular senescence induced by rDNA instability. Acts as a negative regulator of SIRT1 by preventing autodeacetylation of SIRT1, restricting SIRT1 deacetylase activity. This chain is NAD-dependent protein deacetylase sirtuin-7, found in Rattus norvegicus (Rat).